The sequence spans 3483 residues: Nonribosomal peptide synthetase Ao415 (3483 aa).

The interval T281–V669 is adenylation 1. One can recognise a Carrier 1 domain in the interval E775–K851. S812 is modified (O-(pantetheine 4'-phosphoryl)serine). A condensation 1 region spans residues A886–Q1297. The segment at T1363–V1758 is adenylation 2. In terms of domain architecture, Carrier 2 spans E1865 to N1941. S1901 is subject to O-(pantetheine 4'-phosphoryl)serine. Residues I1981–A2379 form a condensation 2 region. Positions T2412–K2485 constitute a Carrier 3 domain. At S2446 the chain carries O-(pantetheine 4'-phosphoryl)serine. The tract at residues E2520–L2917 is condensation 3. The Carrier 4 domain occupies D2954–Q3030. An O-(pantetheine 4'-phosphoryl)serine modification is found at S2991. Residues S3084–T3368 are condensation 4.

It belongs to the NRP synthetase family.

Its pathway is siderophore biosynthesis. Functionally, nonribosomal peptide synthetase; part of the gene cluster that mediates the biosynthesis of desferriferrichrome that chelates Fe(3+) to form ferrichrome. Fe(3+) is a key factor for induction of trap formation and the fungus uses the iron chelating desferriferrichrome to sequester Fe(3+) to inhibit trap formation and increase nematicidal activity. The biosynthesis of desferriferrichrome requires the action of the L-ornithine N(5)-oxygenase (LOO) Ao414 that hydroxylates L-ornithine at N(5), resulting in the formation of N(5)-hydroxyl-L-ornithine, which is subsequently N-acetylated to yield N(5)-acetyl-N(5)-hydroxy-L-ornithine (L-AHO). L-AHO harbors one hydroxamate moiety, which is the key core responsible for chelating iron. Then, L-AHO is further condensated with glycines to form desferriferrichrome through the NRPS protein Ao415. The protein is Nonribosomal peptide synthetase Ao415 of Arthrobotrys oligospora (strain ATCC 24927 / CBS 115.81 / DSM 1491) (Nematode-trapping fungus).